Reading from the N-terminus, the 115-residue chain is Large ribosomal subunit protein bL19 (115 aa).

It belongs to the bacterial ribosomal protein bL19 family.

In terms of biological role, this protein is located at the 30S-50S ribosomal subunit interface and may play a role in the structure and function of the aminoacyl-tRNA binding site. This chain is Large ribosomal subunit protein bL19, found in Bacillus velezensis (strain DSM 23117 / BGSC 10A6 / LMG 26770 / FZB42) (Bacillus amyloliquefaciens subsp. plantarum).